The sequence spans 346 residues: Transcription factor 19 (346 aa).

Residues 31 to 88 (YRLGCRADLCDVALRPQQEPGFISEVHAELHAERRGDDWRVSLEDHSSQGTLVNNVRL) enclose the FHA domain. The residue at position 78 (serine 78) is a Phosphoserine. Disordered regions lie at residues 136-168 (PRSR…TLSP) and 190-289 (LTFS…AAGG). The segment covering 138-147 (SRGEEGETRA) has biased composition (basic and acidic residues). The span at 190–208 (LTFSRSGSGPQNPPVSTTP) shows a compositional bias: polar residues. A compositionally biased stretch (basic and acidic residues) spans 250-260 (EPRKKLLRVEK). The PHD-type zinc-finger motif lies at 294–343 (AAPCCCLPQEETVAWVQCDGCDTWFHVACVGCSIQAAKEADFRCPGCRVG). Positions 297, 299, 311, 314, 319, 322, 337, and 340 each coordinate Zn(2+).

It is found in the nucleus. In terms of biological role, potential transcription factor that may play a role in the regulation of genes involved in cell cycle G1/S transition. May bind to regulatory elements of genes, including the promoter of the transcription factor FOXO1. This Sus scrofa (Pig) protein is Transcription factor 19 (TCF19).